A 224-amino-acid polypeptide reads, in one-letter code: Uracil-DNA glycosylase (224 aa).

Catalysis depends on Asp-62, which acts as the Proton acceptor.

Belongs to the uracil-DNA glycosylase (UDG) superfamily. UNG family.

The protein resides in the cytoplasm. It carries out the reaction Hydrolyzes single-stranded DNA or mismatched double-stranded DNA and polynucleotides, releasing free uracil.. Its function is as follows. Excises uracil residues from the DNA which can arise as a result of misincorporation of dUMP residues by DNA polymerase or due to deamination of cytosine. This chain is Uracil-DNA glycosylase, found in Aliivibrio salmonicida (strain LFI1238) (Vibrio salmonicida (strain LFI1238)).